A 326-amino-acid polypeptide reads, in one-letter code: Heat-inducible transcription repressor HrcA (326 aa).

This sequence belongs to the HrcA family.

In terms of biological role, negative regulator of class I heat shock genes (grpE-dnaK-dnaJ and groELS operons). Prevents heat-shock induction of these operons. In Staphylococcus saprophyticus subsp. saprophyticus (strain ATCC 15305 / DSM 20229 / NCIMB 8711 / NCTC 7292 / S-41), this protein is Heat-inducible transcription repressor HrcA.